Here is a 205-residue protein sequence, read N- to C-terminus: Phosphoribosyl-dephospho-CoA transferase (205 aa).

Residues aspartate 134 and aspartate 136 contribute to the active site.

This sequence belongs to the MdcG family.

It catalyses the reaction apo-[malonate decarboxylase ACP] + 2'-(5''-triphospho-alpha-D-ribosyl)-3'-dephospho-CoA = holo-[malonate decarboxylase ACP] + diphosphate. Its function is as follows. Transfers 2'-(5-triphosphoribosyl)-3'-dephosphocoenzyme-A to the apo-[acyl-carrier-protein] of the malonate decarboxylase to yield holo-[acyl-carrier-protein]. In Klebsiella pneumoniae subsp. pneumoniae (strain ATCC 700721 / MGH 78578), this protein is Phosphoribosyl-dephospho-CoA transferase.